Reading from the N-terminus, the 611-residue chain is Chaperone protein DnaK (611 aa).

A Phosphothreonine; by autocatalysis modification is found at Thr-173. Positions 577-592 are enriched in low complexity; the sequence is QAAAGQAEGAQGAQDA. Residues 577–611 are disordered; that stretch reads QAAAGQAEGAQGAQDAGTKKDNVVDAEFEEVKEDK. A compositionally biased stretch (acidic residues) spans 600–611; that stretch reads VDAEFEEVKEDK.

It belongs to the heat shock protein 70 family.

Acts as a chaperone. In Bacillus cereus (strain G9842), this protein is Chaperone protein DnaK.